The sequence spans 201 residues: Prostamide/prostaglandin F synthase (201 aa).

The protein belongs to the peroxiredoxin-like PRXL2 family. Prostamide/prostaglandin F synthase subfamily.

It localises to the cytoplasm. The protein localises to the cytosol. It carries out the reaction prostaglandin H2 + [thioredoxin]-dithiol = prostaglandin F2alpha + [thioredoxin]-disulfide. The enzyme catalyses prostamide F2alpha + [thioredoxin]-disulfide = prostamide H2 + [thioredoxin]-dithiol. In terms of biological role, catalyzes the reduction of prostaglandin-ethanolamide H(2) (prostamide H(2)) to prostamide F(2alpha) with NADPH as proton donor. Also able to reduce prostaglandin H(2) to prostaglandin F(2alpha). In Danio rerio (Zebrafish), this protein is Prostamide/prostaglandin F synthase (prxl2b).